A 198-amino-acid chain; its full sequence is Small ribosomal subunit protein uS2 (198 aa).

This sequence belongs to the universal ribosomal protein uS2 family.

The chain is Small ribosomal subunit protein uS2 (rps2) from Methanothermobacter thermautotrophicus (strain ATCC 29096 / DSM 1053 / JCM 10044 / NBRC 100330 / Delta H) (Methanobacterium thermoautotrophicum).